Consider the following 118-residue polypeptide: Succinate dehydrogenase assembly factor 1, mitochondrial (118 aa).

Positions 14–16 (LYR) match the LYR motif 1; required for interaction with HSC20 motif. Residues 53–55 (LYR) carry the LYR motif 2; not required for interaction with HSC20 motif. The tract at residues 53-65 (LYRRGRRQLQLLR) is interaction with SDHB. The disordered stretch occupies residues 68 to 118 (HATAMGTFVRPRGPAEEPGDATAPGTRLDDGGAPKNSCEDTGARETRSDGR). Over residues 94–118 (RLDDGGAPKNSCEDTGARETRSDGR) the composition is skewed to basic and acidic residues.

The protein belongs to the complex I LYR family. SDHAF1 subfamily. Interacts with SDHB within an SDHA-SDHB subcomplex. Also interacts with the iron-sulfur transfer complex formed by HSC20, HSPA9 and ISCU through direct binding to HSC20. Binding of SDHAF1 to SDHB precedes and is necessary for recruitment of the iron-sulfur transfer complex by SDHAF1.

The protein localises to the mitochondrion matrix. Functionally, plays an essential role in the assembly of succinate dehydrogenase (SDH), an enzyme complex (also referred to as respiratory complex II) that is a component of both the tricarboxylic acid (TCA) cycle and the mitochondrial electron transport chain, and which couples the oxidation of succinate to fumarate with the reduction of ubiquinone (coenzyme Q) to ubiquinol. Promotes maturation of the iron-sulfur protein subunit Sdhb of the SDH catalytic dimer, protecting it from the deleterious effects of oxidants. May act together with SDHAF3. Contributes to iron-sulfur cluster incorporation into SDHB by binding to SDHB and recruiting the iron-sulfur transfer complex formed by HSC20, HSPA9 and ISCU through direct binding to HSC20. This Mus musculus (Mouse) protein is Succinate dehydrogenase assembly factor 1, mitochondrial.